Reading from the N-terminus, the 144-residue chain is Bacilliredoxin BLi02323/BL05224 (144 aa).

This sequence belongs to the bacilliredoxin family.

This is Bacilliredoxin BLi02323/BL05224 from Bacillus licheniformis (strain ATCC 14580 / DSM 13 / JCM 2505 / CCUG 7422 / NBRC 12200 / NCIMB 9375 / NCTC 10341 / NRRL NRS-1264 / Gibson 46).